Here is a 240-residue protein sequence, read N- to C-terminus: Large ribosomal subunit protein bL25 (240 aa).

Disordered regions lie at residues 1–23 (MATVKELKATARPAGGKGAARAE) and 207–240 (PAAAPAAGAKAPAAGAKAPAAGAKAPAAPAAKKK).

Belongs to the bacterial ribosomal protein bL25 family. CTC subfamily. As to quaternary structure, part of the 50S ribosomal subunit; part of the 5S rRNA/L5/L18/L25 subcomplex. Contacts the 5S rRNA. Binds to the 5S rRNA independently of L5 and L18.

Its function is as follows. This is one of the proteins that binds to the 5S RNA in the ribosome where it forms part of the central protuberance. The polypeptide is Large ribosomal subunit protein bL25 (Rhodopseudomonas palustris (strain BisB18)).